The sequence spans 101 residues: MAAPVSLQVEFGGGAELLFDGVKKHQVTLPSQPEPWDIRNLLKWIKQNLLKERPELFMQGESVRPGILVLINDADWELMGELDYKLQDQDNVLFISTLHGG.

Glycine 101 bears the 1-thioglycine mark. Glycine 101 is covalently cross-linked (Glycyl lysine isopeptide (Gly-Lys) (interchain with K-? in acceptor proteins)).

Belongs to the URM1 family. Post-translationally, C-terminal thiocarboxylation occurs in 2 steps, it is first acyl-adenylated (-COAMP) via the hesA/moeB/thiF part of the MOCS3 homolog, then thiocarboxylated (-COSH) via the rhodanese domain of the MOCS3 homolog.

Its subcellular location is the cytoplasm. It functions in the pathway tRNA modification; 5-methoxycarbonylmethyl-2-thiouridine-tRNA biosynthesis. Acts as a sulfur carrier required for 2-thiolation of mcm(5)S(2)U at tRNA wobble positions of cytosolic tRNA(Lys), tRNA(Glu) and tRNA(Gln). Serves as sulfur donor in tRNA 2-thiolation reaction by being thiocarboxylated (-COSH) at its C-terminus by MOCS3. The sulfur is then transferred to tRNA to form 2-thiolation of mcm(5)S(2)U. Also acts as a ubiquitin-like protein (UBL) that is covalently conjugated via an isopeptide bond to lysine residues of target proteins. The thiocarboxylated form serves as substrate for conjugation and oxidative stress specifically induces the formation of UBL-protein conjugates. The chain is Ubiquitin-related modifier 1 from Gallus gallus (Chicken).